We begin with the raw amino-acid sequence, 162 residues long: 6,7-dimethyl-8-ribityllumazine synthase (162 aa).

5-amino-6-(D-ribitylamino)uracil-binding positions include Phe-23, 61–63, and 85–87; these read AYE and AVI. 90-91 provides a ligand contact to (2S)-2-hydroxy-3-oxobutyl phosphate; the sequence is DT. Residue His-93 is the Proton donor of the active site. Phe-118 provides a ligand contact to 5-amino-6-(D-ribitylamino)uracil. Arg-132 is a (2S)-2-hydroxy-3-oxobutyl phosphate binding site.

Belongs to the DMRL synthase family.

It carries out the reaction (2S)-2-hydroxy-3-oxobutyl phosphate + 5-amino-6-(D-ribitylamino)uracil = 6,7-dimethyl-8-(1-D-ribityl)lumazine + phosphate + 2 H2O + H(+). It participates in cofactor biosynthesis; riboflavin biosynthesis; riboflavin from 2-hydroxy-3-oxobutyl phosphate and 5-amino-6-(D-ribitylamino)uracil: step 1/2. Its function is as follows. Catalyzes the formation of 6,7-dimethyl-8-ribityllumazine by condensation of 5-amino-6-(D-ribitylamino)uracil with 3,4-dihydroxy-2-butanone 4-phosphate. This is the penultimate step in the biosynthesis of riboflavin. This Synechococcus sp. (strain CC9902) protein is 6,7-dimethyl-8-ribityllumazine synthase.